We begin with the raw amino-acid sequence, 1085 residues long: Phosphorylase b kinase regulatory subunit beta (1085 aa).

Phosphoserine occurs at positions 10, 19, and 693. Calmodulin-binding stretches follow at residues 760-787 and 912-943; these read RVYR…VVDS and SGRC…ILER. Cysteine 1082 carries the S-farnesyl cysteine lipid modification.

Belongs to the phosphorylase b kinase regulatory chain family. Hexadecamer of 4 heterotetramers, each composed of alpha, beta, gamma, and delta subunits. Alpha (PHKA1 or PHKA2) and beta (PHKB) are regulatory subunits, gamma (PHKG1 or PHKG2) is the catalytic subunit, and delta is calmodulin. In terms of processing, although the final Cys may be farnesylated, the terminal tripeptide is probably not removed, and the C-terminus is not methylated.

The protein resides in the cell membrane. It functions in the pathway glycan biosynthesis; glycogen metabolism. Its activity is regulated as follows. By phosphorylation of various serine residues. Phosphorylase b kinase catalyzes the phosphorylation of serine in certain substrates, including troponin I. The beta chain acts as a regulatory unit and modulates the activity of the holoenzyme in response to phosphorylation. The chain is Phosphorylase b kinase regulatory subunit beta (Phkb) from Mus musculus (Mouse).